A 460-amino-acid polypeptide reads, in one-letter code: Adenosylhomocysteinase (460 aa).

Positions 83, 158, and 184 each coordinate substrate. 185–187 is an NAD(+) binding site; the sequence is TTT. Substrate is bound by residues lysine 214 and aspartate 218. Residues asparagine 219, 248-253, glutamate 271, 327-329, and asparagine 373 contribute to the NAD(+) site; these read GYGDVG and IGH.

Belongs to the adenosylhomocysteinase family. NAD(+) serves as cofactor.

It localises to the cytoplasm. It catalyses the reaction S-adenosyl-L-homocysteine + H2O = L-homocysteine + adenosine. It participates in amino-acid biosynthesis; L-homocysteine biosynthesis; L-homocysteine from S-adenosyl-L-homocysteine: step 1/1. Its function is as follows. May play a key role in the regulation of the intracellular concentration of adenosylhomocysteine. This Bdellovibrio bacteriovorus (strain ATCC 15356 / DSM 50701 / NCIMB 9529 / HD100) protein is Adenosylhomocysteinase.